Reading from the N-terminus, the 187-residue chain is UPF0340 protein SPN23F05980 (187 aa).

The protein belongs to the UPF0340 family.

This is UPF0340 protein SPN23F05980 from Streptococcus pneumoniae (strain ATCC 700669 / Spain 23F-1).